The primary structure comprises 79 residues: Hematopoietic cell signal transducer (79 aa).

Positions 1 to 18 (MIHPGHILFLLLLPVAAA) are cleaved as a signal peptide. Residues 19–34 (QTTPGSCSGCGSLSLP) lie on the Extracellular side of the membrane. The helical transmembrane segment at 35–55 (LLAGLVAADAVASPLIVGAVF) threads the bilayer. Residues 56–79 (LCARPRRSPAQGDGKVYINMPGRG) lie on the Cytoplasmic side of the membrane. A Phosphotyrosine modification is found at Tyr-72. Residues 72–74 (YIN) form a GRB2 binding site region. Residues 72-75 (YINM) form a PIK3R1 binding site region.

This sequence belongs to the DAP10 family. Homodimer; Disulfide-linked. Heterohexamer composed of four subunits of HCST/DAP10 and two subunits of KLRK1. Interacts (via transmembrane domain) with KLRK1 (via transmembrane domain); the interaction is required for KLRK1 NK cell surface and induces NK cell-mediated cytotoxicity. Interacts with PIK3R1 and GRB2. Interacts with CLEC5A. Forms an CLEC5A/TYROBP/HCST trimolecular complex depending almost solely on TYROBP. Interacts with CD300H. Phosphorylated; PIK3R1 and GRB2 associate specifically with tyrosine-phosphorylated HCST. Post-translationally, O-glycosylated.

The protein resides in the membrane. In terms of biological role, transmembrane adapter protein which associates with KLRK1 to form an activation receptor KLRK1-HCST in lymphoid and myeloid cells; this receptor plays a major role in triggering cytotoxicity against target cells expressing cell surface ligands such as MHC class I chain-related MICA and MICB, and UL16-binding proteins (ULBPs); these ligands are up-regulated by stress conditions and pathological state such as viral infection and tumor transformation. Functions as a docking site for PI3-kinase PIK3R1 and GRB2. Interaction of ULBPs with KLRK1-HCST triggers calcium mobilization and activation of the PIK3R1, MAP2K/ERK, and JAK2/STAT5 signaling pathways. Both PIK3R1 and GRB2 are required for full KLRK1-HCST-mediated activation and ultimate killing of target cells. In NK cells, KLRK1-HCST signaling directly induces cytotoxicity and enhances cytokine production initiated via DAP12/TYROBP-associated receptors. In T-cells, it provides primarily costimulation for TCR-induced signals. KLRK1-HCST receptor plays a role in immune surveillance against tumors and is required for cytolysis of tumors cells; indeed, melanoma cells that do not express KLRK1 ligands escape from immune surveillance mediated by NK cells. The protein is Hematopoietic cell signal transducer (HCST) of Macaca mulatta (Rhesus macaque).